The sequence spans 216 residues: ATP phosphoribosyltransferase (216 aa).

Belongs to the ATP phosphoribosyltransferase family. Short subfamily. Heteromultimer composed of HisG and HisZ subunits.

Its subcellular location is the cytoplasm. The enzyme catalyses 1-(5-phospho-beta-D-ribosyl)-ATP + diphosphate = 5-phospho-alpha-D-ribose 1-diphosphate + ATP. Its pathway is amino-acid biosynthesis; L-histidine biosynthesis; L-histidine from 5-phospho-alpha-D-ribose 1-diphosphate: step 1/9. Its function is as follows. Catalyzes the condensation of ATP and 5-phosphoribose 1-diphosphate to form N'-(5'-phosphoribosyl)-ATP (PR-ATP). Has a crucial role in the pathway because the rate of histidine biosynthesis seems to be controlled primarily by regulation of HisG enzymatic activity. The chain is ATP phosphoribosyltransferase from Nitrosomonas eutropha (strain DSM 101675 / C91 / Nm57).